The following is a 213-amino-acid chain: Sclerostin (213 aa).

An N-terminal signal peptide occupies residues 1-23 (MQLPLALCLVCLLVHAAFRVVEG). The segment at 41 to 71 (GEYPEPPPELENNKTMNRAENGGRPPHHPFE) is disordered. Residue asparagine 53 is glycosylated (N-linked (GlcNAc...) asparagine). 4 disulfide bridges follow: cysteine 80–cysteine 134, cysteine 94–cysteine 148, cysteine 105–cysteine 165, and cysteine 109–cysteine 167. In terms of domain architecture, CTCK spans 82 to 172 (ELHFTRYVTD…ASCKCKRLTR (91 aa)). Asparagine 175 is a glycosylation site (N-linked (GlcNAc...) asparagine). Residues 178–213 (ELKDFGPEAARPQKGRKPRPRARGAKANQAELENAY) are disordered. The segment covering 190–201 (QKGRKPRPRARG) has biased composition (basic residues).

Belongs to the sclerostin family. Interacts with LRP4 (via the extracellular domain); the interaction facilitates the inhibition of Wnt signaling. Interacts with LRP5 (via the first two YWTD-EGF repeat domains); the interaction inhibits Wnt-mediated signaling. Interacts with LRP6.

Its subcellular location is the secreted. The protein resides in the extracellular space. It is found in the extracellular matrix. In terms of biological role, negative regulator of bone growth that acts through inhibition of Wnt signaling and bone formation. This chain is Sclerostin, found in Chlorocebus aethiops (Green monkey).